Here is a 125-residue protein sequence, read N- to C-terminus: Small ribosomal subunit protein bS6 (125 aa).

Residues 96–125 (VTAPSPMMREEKAKSAPQPAEEAKETTLAT) form a disordered region. Basic and acidic residues predominate over residues 116-125 (EEAKETTLAT).

The protein belongs to the bacterial ribosomal protein bS6 family.

Its function is as follows. Binds together with bS18 to 16S ribosomal RNA. In Nitrosospira multiformis (strain ATCC 25196 / NCIMB 11849 / C 71), this protein is Small ribosomal subunit protein bS6.